Here is a 368-residue protein sequence, read N- to C-terminus: uncharacterized protein (368 aa).

A run of 5 helical transmembrane segments spans residues 22-42 (VAGI…FTLI), 74-94 (FVKP…LLVL), 104-124 (FLKT…LNLF), 144-164 (VGDF…GASL), and 168-188 (WGVN…AVSL).

This sequence belongs to the MscS (TC 1.A.23) family.

Its subcellular location is the cell membrane. This is an uncharacterized protein from Aquifex aeolicus (strain VF5).